The following is a 594-amino-acid chain: Insulin-like growth factor 2 mRNA-binding protein 3-A (594 aa).

RRM domains lie at 2–75 and 81–156; these read NKLY…HSVP and RKLQ…YIPD. The segment covering 161–177 has biased composition (low complexity); it reads PQAPSQQLQQQPQQQHP. A disordered region spans residues 161-206; that stretch reads PQAPSQQLQQQPQQQHPQGRRGFGQRGPARQGSPGAAARPKPQTEV. KH domains lie at 205-270 and 286-353; these read EVPL…CKII and EIPL…EEEI. Residues 392–415 are disordered; it reads GMPPPSVGVPSPTSSTSYPPFGQQ. Residues 399 to 411 show a composition bias toward low complexity; it reads GVPSPTSSTSYPP. KH domains follow at residues 418–483 and 500–566; these read SETV…QGRI and KLET…QRKI.

This sequence belongs to the RRM IMP/VICKZ family. In terms of assembly, homodimer and multimer. Associates with microtubules. Interaction with a translocation machinery protein TRAPA of the endoplasmic reticulum. Component of a mRNP complex, at least composed of DAZAP1, IGF2BP3, STAU and VgRBP60. The mRNP complex with DAZAP1, IGF2BP3, STAU and VgRBP60 is only found in the cytoplasm. Interacts with a hnRNP 1 related RNA transport protein VgRBP60 both in the nucleus (in a RNA-independent manner) and the cytoplasm (in a RNA-dependent manner). Found in a B3 activator complex.

The protein localises to the nucleus. Its subcellular location is the cytoplasm. The protein resides in the endoplasmic reticulum. Its function is as follows. RNA-binding protein that acts as a regulator of mRNA transport and localization. Binds to the RNA sequence motif 5'-UUCAC-3'. Preferentially binds to N6-methyladenosine (m6A)-containing mRNAs and increases their stability. Mediates the specific association of Vg1 RNA to microtubules. Binds specifically to the vegetal localization elements (VLE or VgLE) in the 3'-UTR of Vg1 and VegT mRNAs. Binds to the Vg1 and VegT mRNAs in both the nucleus and the cytoplasm. May regulate mRNA translation. Acts as a transcription regulator. Binds to the 5'-[TA]GGTTACT-3' motif within element 3 of the TFIIIA gene promoter. The sequence is that of Insulin-like growth factor 2 mRNA-binding protein 3-A (igf2bp3-a) from Xenopus laevis (African clawed frog).